A 1165-amino-acid polypeptide reads, in one-letter code: MTGLNGDDPDDYYLNLNQDEESLLRSRHSVGSGAPHRQGSLVRPERSRLNNPDNPHFYYAQKTQEQMNHLDVLPSSTGVNPNATRRSGSLRSKGSVRSKFSGRETDSYLLQDMNTTDKKASVKISDEGVAEDEFDKDGDVDNFEESSTQPINKSIKPLRKETNDTLSFWQMYCYFITFWAPAPILAFCGMPKKERQMAWREKVALISVILYIGAIVAFLTFGFTKTVCSSSKLRLKNNEVSTEFVVINGKAYELDTSSRSGIQDVEVDSDTLYGPWSDAGKDASFLFQNVNGNCHNLITPKSNSSIPHDDDNNLAWYFPCKLKNQDGSSKPNFTVENYAGWNCHTSKEDRDAFYGLKSKADVYFTWDGIKNSSRNLIVYNGDVLDLDLLDWLEKDDVDYPVVFDDLKTSNLQGYDLSLVLSNGHERKIARCLSEIIKVGEVDSKTVGCIASDVVLYVSLVFILSVVIIKFIIACYFRWTVARKQGAYIVDNKTMDKHTNDIEDWSNNIQTKAPLKEVDPHLRPKKYSKKSLGHKRASTFDLLKKHSSKMFQFNESVIDLDTSMSSSLQSSGSYRGMTTMTTQNAWKLSNENKAVHSRNPSTLLPTSSMFWNKATSSPVPGSSLIQSLDSTIIHPDIVQQPPLDFMPYGFPLIHTICFVTCYSEDEEGLRTTLDSLSTTDYPNSHKLLMVVCDGLIKGSGNDKTTPEIALGMMDDFVTPPDEVKPYSYVAVASGSKRHNMAKIYAGFYKYDDSTIPPENQQRVPIITIVKCGTPAEQGAAKPGNRGKRDSQIILMSFLEKITFDERMTQLEFQLLKNIWQITGLMADFYETVLMVDADTKVFPDALTHMVAEMVKDPLIMGLCGETKIANKAQSWVTAIQVFEYYISHHQAKAFESVFGSVTCLPGCFSMYRIKSPKGSDGYWVPVLANPDIVERYSDNVTNTLHKKNLLLLGEDRFLSSLMLKTFPKRKQVFVPKAACKTIAPDKFKVLLSQRRRWINSTVHNLFELVLIRDLCGTFCFSMQFVIGIELIGTMVLPLAICFTIYVIIFAIVSKPTPVITLVLLAIILGLPGLIVVITATRWSYLWWMCVYICALPIWNFVLPSYAYWKFDDFSWGDTRTIAGGNKKAQDENEGEFDHSKIKMRTWREFEREDILNRKEESDSFVA.

The Cytoplasmic segment spans residues 1–170; sequence MTGLNGDDPD…ETNDTLSFWQ (170 aa). Disordered stretches follow at residues 19–53 and 74–97; these read DEES…NNPD and PSST…GSVR. The span at 74–92 shows a compositional bias: polar residues; it reads PSSTGVNPNATRRSGSLRS. K136 is covalently cross-linked (Glycyl lysine isopeptide (Lys-Gly) (interchain with G-Cter in ubiquitin)). Residues 171-191 form a helical membrane-spanning segment; the sequence is MYCYFITFWAPAPILAFCGMP. Topologically, residues 192 to 340 are extracellular; it reads KKERQMAWRE…PNFTVENYAG (149 aa). N-linked (GlcNAc...) asparagine glycosylation is found at N303 and N332. A helical transmembrane segment spans residues 341–354; that stretch reads WNCHTSKEDRDAFY. Over 355–452 the chain is Cytoplasmic; the sequence is GLKSKADVYF…SKTVGCIASD (98 aa). A helical transmembrane segment spans residues 453–473; sequence VVLYVSLVFILSVVIIKFIIA. The Extracellular segment spans residues 474 to 891; it reads CYFRWTVARK…EYYISHHQAK (418 aa). S537 is modified (phosphoserine). T538 carries the post-translational modification Phosphothreonine. A helical membrane pass occupies residues 892–910; it reads AFESVFGSVTCLPGCFSMY. Topologically, residues 911–1029 are cytoplasmic; the sequence is RIKSPKGSDG…SMQFVIGIEL (119 aa). The helical transmembrane segment at 1030 to 1050 threads the bilayer; that stretch reads IGTMVLPLAICFTIYVIIFAI. Residues 1051–1055 are Extracellular-facing; it reads VSKPT. A helical membrane pass occupies residues 1056–1076; sequence PVITLVLLAIILGLPGLIVVI. Over 1077 to 1165 the chain is Cytoplasmic; it reads TATRWSYLWW…RKEESDSFVA (89 aa).

The protein belongs to the chitin synthase family. Class IV subfamily. In terms of assembly, homodimer. May form higher order oligomers. Seems to interact with BNI4 and SKT5 which link CHS3 to septins. In terms of processing, glycosylated. Post-translationally, palmitoylated by PFA4; required for proper export from the ER.

The protein localises to the cell membrane. The protein resides in the bud neck. It localises to the cytoplasmic vesicle membrane. It carries out the reaction [(1-&gt;4)-N-acetyl-beta-D-glucosaminyl](n) + UDP-N-acetyl-alpha-D-glucosamine = [(1-&gt;4)-N-acetyl-beta-D-glucosaminyl](n+1) + UDP + H(+). Its function is as follows. Polymerizes chitin, a structural polymer of the cell wall and septum, by transferring the sugar moiety of UDP-GlcNAc to the non-reducing end of the growing chitin polymer. Appears to be responsible for synthesis of the majority of the chitin found in the cell wall periphery. It is involved in the synthesis of the chitin ring that forms in the cell wall just before bud emergence. This ring remains at the base of the bud as the bud grows and ultimately forms part of the bud scar marking the division site on the mother cell. Also catalyzes the synthesis of chitin laid down during mating and spore cell-wall synthesis. The sequence is that of Chitin synthase 3 from Saccharomyces cerevisiae (strain ATCC 204508 / S288c) (Baker's yeast).